The following is a 141-amino-acid chain: Nucleoside diphosphate kinase (141 aa).

Residues K11, F59, R87, T93, R104, and N114 each coordinate ATP. H117 functions as the Pros-phosphohistidine intermediate in the catalytic mechanism.

This sequence belongs to the NDK family. In terms of assembly, homotetramer. Mg(2+) serves as cofactor.

The protein localises to the cytoplasm. The enzyme catalyses a 2'-deoxyribonucleoside 5'-diphosphate + ATP = a 2'-deoxyribonucleoside 5'-triphosphate + ADP. The catalysed reaction is a ribonucleoside 5'-diphosphate + ATP = a ribonucleoside 5'-triphosphate + ADP. Major role in the synthesis of nucleoside triphosphates other than ATP. The ATP gamma phosphate is transferred to the NDP beta phosphate via a ping-pong mechanism, using a phosphorylated active-site intermediate. This chain is Nucleoside diphosphate kinase, found in Stenotrophomonas maltophilia (strain R551-3).